The chain runs to 168 residues: Thiol peroxidase (168 aa).

The Thioredoxin domain occupies 19–168; it reads PQAGSKAQTF…YEAALAVLKA (150 aa). Residue cysteine 61 is the Cysteine sulfenic acid (-SOH) intermediate of the active site. A disulfide bridge links cysteine 61 with cysteine 95.

It belongs to the peroxiredoxin family. Tpx subfamily. In terms of assembly, homodimer.

The catalysed reaction is a hydroperoxide + [thioredoxin]-dithiol = an alcohol + [thioredoxin]-disulfide + H2O. Functionally, thiol-specific peroxidase that catalyzes the reduction of hydrogen peroxide and organic hydroperoxides to water and alcohols, respectively. Plays a role in cell protection against oxidative stress by detoxifying peroxides. The polypeptide is Thiol peroxidase (Shigella dysenteriae).